An 85-amino-acid chain; its full sequence is Large ribosomal subunit protein bL27 (85 aa).

The tract at residues 1-20 (MATKKAGGSTKNGRDSNPKM) is disordered.

The protein belongs to the bacterial ribosomal protein bL27 family.

The polypeptide is Large ribosomal subunit protein bL27 (Acinetobacter baumannii (strain AB307-0294)).